The following is a 138-amino-acid chain: Probable lactoylglutathione lyase (138 aa).

A VOC domain is found at 5-129; it reads RILHTMLRVG…DGYMIELIQN (125 aa). Ni(2+) is bound at residue H8. R12 provides a ligand contact to substrate. Position 59 (E59) interacts with Ni(2+). N63 and H77 together coordinate substrate. Ni(2+)-binding residues include H77 and E125. The active-site Proton donor/acceptor is the E125.

It belongs to the glyoxalase I family. It depends on Ni(2+) as a cofactor.

It catalyses the reaction (R)-S-lactoylglutathione = methylglyoxal + glutathione. The protein operates within secondary metabolite metabolism; methylglyoxal degradation; (R)-lactate from methylglyoxal: step 1/2. Catalyzes the conversion of hemimercaptal, formed from methylglyoxal and glutathione, to S-lactoylglutathione. This is Probable lactoylglutathione lyase (gloA) from Vibrio cholerae serotype O1 (strain ATCC 39315 / El Tor Inaba N16961).